The sequence spans 429 residues: Adenylosuccinate synthetase (429 aa).

GTP-binding positions include 12-18 (GDEGKGK) and 40-42 (GHT). The active-site Proton acceptor is Asp13. Mg(2+)-binding residues include Asp13 and Gly40. IMP contacts are provided by residues 13-16 (DEGK), 38-41 (NAGH), Thr128, Arg142, Gln223, Thr238, and Arg302. His41 (proton donor) is an active-site residue. 298–304 (TTTGRPR) provides a ligand contact to substrate. GTP contacts are provided by residues Arg304, 330 to 332 (SID), and 412 to 414 (SVG).

This sequence belongs to the adenylosuccinate synthetase family. As to quaternary structure, homodimer. It depends on Mg(2+) as a cofactor.

It is found in the cytoplasm. It catalyses the reaction IMP + L-aspartate + GTP = N(6)-(1,2-dicarboxyethyl)-AMP + GDP + phosphate + 2 H(+). The protein operates within purine metabolism; AMP biosynthesis via de novo pathway; AMP from IMP: step 1/2. Its function is as follows. Plays an important role in the de novo pathway of purine nucleotide biosynthesis. Catalyzes the first committed step in the biosynthesis of AMP from IMP. The sequence is that of Adenylosuccinate synthetase from Bacillus thuringiensis (strain Al Hakam).